The following is a 66-amino-acid chain: Large ribosomal subunit protein bL31 (66 aa).

Zn(2+)-binding residues include C16, C18, C36, and C39.

Belongs to the bacterial ribosomal protein bL31 family. Type A subfamily. As to quaternary structure, part of the 50S ribosomal subunit. The cofactor is Zn(2+).

Binds the 23S rRNA. The sequence is that of Large ribosomal subunit protein bL31 from Geobacillus sp. (strain WCH70).